A 325-amino-acid polypeptide reads, in one-letter code: Tagatose 1,6-diphosphate aldolase 1 (325 aa).

This sequence belongs to the aldolase LacD family.

The catalysed reaction is D-tagatofuranose 1,6-bisphosphate = D-glyceraldehyde 3-phosphate + dihydroxyacetone phosphate. The protein operates within carbohydrate metabolism; D-tagatose 6-phosphate degradation; D-glyceraldehyde 3-phosphate and glycerone phosphate from D-tagatose 6-phosphate: step 2/2. The protein is Tagatose 1,6-diphosphate aldolase 1 (lacD1) of Streptococcus pyogenes serotype M3 (strain ATCC BAA-595 / MGAS315).